The following is a 389-amino-acid chain: Galactokinase (389 aa).

Position 33 to 36 (Glu-33 to Asp-36) interacts with substrate. ATP-binding positions include Ser-67 and Gly-124–Ser-130. The Mg(2+) site is built by Ser-130 and Glu-162. Asp-174 acts as the Proton acceptor in catalysis. Tyr-224 is a binding site for substrate.

Belongs to the GHMP kinase family. GalK subfamily.

The protein localises to the cytoplasm. It catalyses the reaction alpha-D-galactose + ATP = alpha-D-galactose 1-phosphate + ADP + H(+). It functions in the pathway carbohydrate metabolism; galactose metabolism. Catalyzes the transfer of the gamma-phosphate of ATP to D-galactose to form alpha-D-galactose-1-phosphate (Gal-1-P). This chain is Galactokinase, found in Fusobacterium nucleatum subsp. nucleatum (strain ATCC 25586 / DSM 15643 / BCRC 10681 / CIP 101130 / JCM 8532 / KCTC 2640 / LMG 13131 / VPI 4355).